A 146-amino-acid polypeptide reads, in one-letter code: D-aminoacyl-tRNA deacylase (146 aa).

Residues 138-139 carry the Gly-cisPro motif, important for rejection of L-amino acids motif; sequence GP.

It belongs to the DTD family. In terms of assembly, homodimer.

It is found in the cytoplasm. It carries out the reaction glycyl-tRNA(Ala) + H2O = tRNA(Ala) + glycine + H(+). The catalysed reaction is a D-aminoacyl-tRNA + H2O = a tRNA + a D-alpha-amino acid + H(+). Functionally, an aminoacyl-tRNA editing enzyme that deacylates mischarged D-aminoacyl-tRNAs. Also deacylates mischarged glycyl-tRNA(Ala), protecting cells against glycine mischarging by AlaRS. Acts via tRNA-based rather than protein-based catalysis; rejects L-amino acids rather than detecting D-amino acids in the active site. By recycling D-aminoacyl-tRNA to D-amino acids and free tRNA molecules, this enzyme counteracts the toxicity associated with the formation of D-aminoacyl-tRNA entities in vivo and helps enforce protein L-homochirality. This chain is D-aminoacyl-tRNA deacylase, found in Stenotrophomonas maltophilia (strain K279a).